The chain runs to 133 residues: Histone H2A.1 (133 aa).

The tract at residues 1-23 (MSTTGKGGKAKGKTASSKQVSRS) is disordered. The residue at position 2 (serine 2) is an N-acetylserine. N6-acetyllysine occurs at positions 6, 9, 11, 13, and 18. Residue serine 123 is modified to Phosphoserine. Residue lysine 124 forms a Glycyl lysine isopeptide (Lys-Gly) (interchain with G-Cter in ubiquitin) linkage. At serine 129 the chain carries Phosphoserine.

Belongs to the histone H2A family. As to quaternary structure, the nucleosome is a histone octamer containing two molecules each of H2A, H2B, H3 and H4 assembled in one H3-H4 heterotetramer and two H2A-H2B heterodimers. The octamer wraps approximately 147 bp of DNA. Post-translationally, monoubiquitination of Lys-124 gives a specific tag for epigenetic transcriptional repression. In terms of processing, acetylation occurs almost exclusively in the MAC.

The protein resides in the nucleus. The protein localises to the chromosome. In terms of biological role, core component of nucleosome. Nucleosomes wrap and compact DNA into chromatin, limiting DNA accessibility to the cellular machineries which require DNA as a template. Histones thereby play a central role in transcription regulation, DNA repair, DNA replication and chromosomal stability. DNA accessibility is regulated via a complex set of post-translational modifications of histones, also called histone code, and nucleosome remodeling. The chain is Histone H2A.1 (HTA2) from Tetrahymena pyriformis.